The following is a 312-amino-acid chain: Expansin-A24 (312 aa).

The N-terminal stretch at 1-27 (MELLKRKLYAKILMMVMVIWIAPMTNG) is a signal peptide. Residues 31 to 86 (ASHVPGGRPGAHPSHGAHPAHGAHPSHGAHPSHGAHPSHGAHPSHGALPSHGGQVP) form a disordered region. A compositionally biased stretch (low complexity) spans 40-77 (GAHPSHGAHPAHGAHPSHGAHPSHGAHPSHGAHPSHGA). 6 repeat units span residues 42-47 (HPSHGA), 48-53 (HPAHGA), 54-59 (HPSHGA), 60-65 (HPSHGA), 66-71 (HPSHGA), and 72-77 (HPSHGA). The 6 X 6 AA tandem repeats of H-P-S-H-G-A stretch occupies residues 42 to 77 (HPSHGAHPAHGAHPSHGAHPSHGAHPSHGAHPSHGA). The 111-residue stretch at 108–218 (QGACGYGDLH…RRVPCAKIGG (111 aa)) folds into the Expansin-like EG45 domain. Positions 228–307 (HFLMILPYNV…DWKCNGQSFD (80 aa)) constitute an Expansin-like CBD domain.

It belongs to the expansin family. Expansin A subfamily.

The protein localises to the secreted. The protein resides in the cell wall. It is found in the membrane. Its function is as follows. Causes loosening and extension of plant cell walls by disrupting non-covalent bonding between cellulose microfibrils and matrix glucans. No enzymatic activity has been found. This chain is Expansin-A24 (EXPA24), found in Arabidopsis thaliana (Mouse-ear cress).